The primary structure comprises 678 residues: Putative pentatricopeptide repeat-containing protein At3g18840 (678 aa).

16 PPR repeats span residues 22-56 (TAVS…NVYS), 57-84 (WNAV…NCER), 85-116 (DLIT…MHRK), 124-158 (DDFT…GNDG), 159-190 (TKFA…CVEF), 192-222 (DSVA…NPEL), 224-258 (DTIS…GLKW), 259-293 (DEHS…GSYS), 294-324 (NKFV…YGFG), 325-359 (NLYS…NLVV), 360-390 (WTAM…ETNT), 392-426 (DSLV…GILM), 427-457 (DKKL…SFER), 458-492 (DTVM…GFKP), 493-528 (DEIT…NISP), and 529-563 (ETGH…EKDA). Residues 565 to 640 (ILGAFLNACS…FSGCSWANID (76 aa)) are type E motif. The segment at 641–671 (KQFHMFTSSDISHYETEAIYAMLHFVTKDLS) is type E(+) motif.

Belongs to the PPR family. PCMP-E subfamily.

The polypeptide is Putative pentatricopeptide repeat-containing protein At3g18840 (PCMP-E92) (Arabidopsis thaliana (Mouse-ear cress)).